Reading from the N-terminus, the 160-residue chain is uncharacterized protein (160 aa).

Residues leucine 7–aspartate 151 enclose the N-acetyltransferase domain.

This is an uncharacterized protein from Bacillus velezensis (strain DSM 23117 / BGSC 10A6 / LMG 26770 / FZB42) (Bacillus amyloliquefaciens subsp. plantarum).